The sequence spans 142 residues: Cell division protein SepF (142 aa).

It belongs to the SepF family. As to quaternary structure, homodimer. Interacts with FtsZ.

The protein resides in the cytoplasm. Cell division protein that is part of the divisome complex and is recruited early to the Z-ring. Probably stimulates Z-ring formation, perhaps through the cross-linking of FtsZ protofilaments. Its function overlaps with FtsA. The polypeptide is Cell division protein SepF (Syntrophomonas wolfei subsp. wolfei (strain DSM 2245B / Goettingen)).